The sequence spans 799 residues: Disintegrin and metalloproteinase domain-containing protein B (799 aa).

A signal peptide spans 1–23 (MKAFSCLLSVIATAASLFQHVDA). At 24–707 (RSHARDKLNN…VSDWVSRHKP (684 aa)) the chain is on the extracellular side. N-linked (GlcNAc...) asparagine glycans are attached at residues Asn-33, Asn-227, Asn-228, Asn-314, and Asn-408. Residues 272–511 (KVALIGVVAD…RTILTSCLTT (240 aa)) enclose the Peptidase M12B domain. 3 cysteine pairs are disulfide-bonded: Cys-396-Cys-496, Cys-449-Cys-460, and Cys-581-Cys-601. His-432 is a Zn(2+) binding site. Residue Glu-433 is part of the active site. 2 residues coordinate Zn(2+): His-436 and His-442. The Disintegrin domain occupies 520–609 (GQQCGNGIVE…DCPHDIHSKD (90 aa)). A helical membrane pass occupies residues 708-728 (IVIGVAVGAGCLLLLAIASCI). At 729–799 (CGRSRRQRPR…PGHLPSTRYA (71 aa)) the chain is on the cytoplasmic side. The segment at 753-799 (VYNGWNGAPPNAQQSSPGGHPPYNNIPPPINAPPPAYPGHLPSTRYA) is disordered. The segment covering 776-789 (NNIPPPINAPPPAY) has biased composition (pro residues).

It depends on Zn(2+) as a cofactor.

The protein resides in the membrane. In terms of biological role, probable zinc protease. In Arthroderma benhamiae (strain ATCC MYA-4681 / CBS 112371) (Trichophyton mentagrophytes), this protein is Disintegrin and metalloproteinase domain-containing protein B (ADM-B).